The sequence spans 79 residues: DNA gyrase inhibitor YacG (79 aa).

Zn(2+)-binding residues include cysteine 7, cysteine 10, cysteine 26, and cysteine 30.

This sequence belongs to the DNA gyrase inhibitor YacG family. In terms of assembly, interacts with GyrB. The cofactor is Zn(2+).

In terms of biological role, inhibits all the catalytic activities of DNA gyrase by preventing its interaction with DNA. Acts by binding directly to the C-terminal domain of GyrB, which probably disrupts DNA binding by the gyrase. The sequence is that of DNA gyrase inhibitor YacG from Shewanella pealeana (strain ATCC 700345 / ANG-SQ1).